Consider the following 296-residue polypeptide: Malonyl-[acyl-carrier protein] O-methyltransferase (296 aa).

This sequence belongs to the methyltransferase superfamily.

The enzyme catalyses malonyl-[ACP] + S-adenosyl-L-methionine = malonyl-[ACP] methyl ester + S-adenosyl-L-homocysteine. Its pathway is cofactor biosynthesis; biotin biosynthesis. In terms of biological role, converts the free carboxyl group of a malonyl-thioester to its methyl ester by transfer of a methyl group from S-adenosyl-L-methionine (SAM). It allows to synthesize pimeloyl-ACP via the fatty acid synthetic pathway. The polypeptide is Malonyl-[acyl-carrier protein] O-methyltransferase (Methylovorus sp. (strain MP688)).